Here is a 242-residue protein sequence, read N- to C-terminus: UPF0273 protein TM_0370 (242 aa).

The KaiC domain occupies Lys-3 to Arg-242. Gly-30–Thr-37 is an ATP binding site.

The protein belongs to the UPF0273 family.

This chain is UPF0273 protein TM_0370, found in Thermotoga maritima (strain ATCC 43589 / DSM 3109 / JCM 10099 / NBRC 100826 / MSB8).